Consider the following 238-residue polypeptide: MQLAVNIDHIATLRNARNEQQPDPVTAAAIAELSGASGIVCHLREDRRHIKDRDLERLRESVTTKLDLEMAMTEEMQRIAIRTKPELITLVPEKREELTTEGGFDIISHYDRLAEFIKPVRDAGIEVSLFIEPEEKAVALAAKAGADIVEMHTGPYSLKKRPEDIDAEIKRIRIAASYARDSGLRVVAGHGLNYYNILPFRRIEEIEEVSIGHALIARAALAGMETAVRDMLHLINEA.

3-amino-2-oxopropyl phosphate is bound at residue Asn-6. Asp-8 to His-9 serves as a coordination point for 1-deoxy-D-xylulose 5-phosphate. Residue Arg-17 coordinates 3-amino-2-oxopropyl phosphate. The active-site Proton acceptor is His-42. Residues Arg-44 and His-49 each contribute to the 1-deoxy-D-xylulose 5-phosphate site. Glu-69 acts as the Proton acceptor in catalysis. Thr-99 serves as a coordination point for 1-deoxy-D-xylulose 5-phosphate. The active-site Proton donor is the His-190. Residues Gly-191 and Gly-212–His-213 contribute to the 3-amino-2-oxopropyl phosphate site.

This sequence belongs to the PNP synthase family. As to quaternary structure, homooctamer; tetramer of dimers.

Its subcellular location is the cytoplasm. The enzyme catalyses 3-amino-2-oxopropyl phosphate + 1-deoxy-D-xylulose 5-phosphate = pyridoxine 5'-phosphate + phosphate + 2 H2O + H(+). It functions in the pathway cofactor biosynthesis; pyridoxine 5'-phosphate biosynthesis; pyridoxine 5'-phosphate from D-erythrose 4-phosphate: step 5/5. In terms of biological role, catalyzes the complicated ring closure reaction between the two acyclic compounds 1-deoxy-D-xylulose-5-phosphate (DXP) and 3-amino-2-oxopropyl phosphate (1-amino-acetone-3-phosphate or AAP) to form pyridoxine 5'-phosphate (PNP) and inorganic phosphate. This chain is Pyridoxine 5'-phosphate synthase, found in Chlorobium phaeobacteroides (strain BS1).